A 259-amino-acid chain; its full sequence is GTP cyclohydrolase FolE2 (259 aa).

It belongs to the GTP cyclohydrolase IV family.

It carries out the reaction GTP + H2O = 7,8-dihydroneopterin 3'-triphosphate + formate + H(+). It participates in cofactor biosynthesis; 7,8-dihydroneopterin triphosphate biosynthesis; 7,8-dihydroneopterin triphosphate from GTP: step 1/1. Converts GTP to 7,8-dihydroneopterin triphosphate. The polypeptide is GTP cyclohydrolase FolE2 (Thermotoga neapolitana (strain ATCC 49049 / DSM 4359 / NBRC 107923 / NS-E)).